The primary structure comprises 299 residues: MSEPIDLSQIAPTLKAEILAEALPYIRRYHGKSVVIKYGGNAMTEERLKQGFARDVILLKLVGINPVIVHGGGPQIDHALKKIGKAGTFIQGMRVTDEETMEVVEWVLGGEVQQDIVMLINHFGGHAVGLTGKDGGLIHARKLLMPDRDNPGQYIDIGQVGEVEAINPAVVKALQDDAFIPVISPIGFGEDGLSYNINADLVAGKLATVLNAEKLLMMTNIPGVMDKDGNLLTDLSAREIDALFEDGTISGGMLPKISSALDAAKSGVKSVHIVDGRIEHSVLLEILTEQPFGTMIRSH.

Substrate is bound by residues 72-73 (GG), Arg94, and Asn196.

This sequence belongs to the acetylglutamate kinase family. ArgB subfamily.

It is found in the cytoplasm. The enzyme catalyses N-acetyl-L-glutamate + ATP = N-acetyl-L-glutamyl 5-phosphate + ADP. The protein operates within amino-acid biosynthesis; L-arginine biosynthesis; N(2)-acetyl-L-ornithine from L-glutamate: step 2/4. Its function is as follows. Catalyzes the ATP-dependent phosphorylation of N-acetyl-L-glutamate. The chain is Acetylglutamate kinase from Burkholderia cenocepacia (strain ATCC BAA-245 / DSM 16553 / LMG 16656 / NCTC 13227 / J2315 / CF5610) (Burkholderia cepacia (strain J2315)).